The sequence spans 118 residues: uncharacterized protein (118 aa).

Transmembrane regions (helical) follow at residues 6–26, 43–63, and 84–104; these read ILILLVIIITTYFTRIWPFMV, ALSCSVIGMLVVYCFKDIHVL, and IFKVFVLSITLPTILYMVLVQ.

The protein belongs to the AzlD/HI_1737/HP1330 family.

The protein resides in the cell membrane. This is an uncharacterized protein from Helicobacter pylori (strain J99 / ATCC 700824) (Campylobacter pylori J99).